Reading from the N-terminus, the 193-residue chain is Translocation protein SEC72 (193 aa).

As to quaternary structure, component of the heterotetrameric Sec62/63complex composed of SEC62, SEC63, SEC71 and SEC72. The Sec62/63 complex associates with the Sec61 complex to form the Sec complex. May interact with protein YLR301W. Part of a complex consisting of KAR2, SEC63, SEC66 and SEC72.

It localises to the cytoplasm. Acts as a non-essential component of the Sec62/63 complex which is involved in SRP-independent post-translational translocation across the endoplasmic reticulum (ER) and functions together with the Sec61 complex and KAR2 in a channel-forming translocon complex. A cycle of assembly and disassembly of Sec62/63 complex from SEC61 may govern the activity of the translocon. SEC72 may be involved in signal peptide recognition for a defined subset of leader peptides, or may increase the efficiency of unusual or 'difficult' secretory precursors to the translocation pore, it may be that this protein binds charged leader peptides to the membrane until they engage the translocation apparatus. The sequence is that of Translocation protein SEC72 (SEC72) from Saccharomyces cerevisiae (strain ATCC 204508 / S288c) (Baker's yeast).